Here is a 240-residue protein sequence, read N- to C-terminus: Probable transcriptional regulatory protein Csal_0810 (240 aa).

Belongs to the TACO1 family.

The protein localises to the cytoplasm. In Chromohalobacter salexigens (strain ATCC BAA-138 / DSM 3043 / CIP 106854 / NCIMB 13768 / 1H11), this protein is Probable transcriptional regulatory protein Csal_0810.